Here is a 503-residue protein sequence, read N- to C-terminus: ATP synthase subunit alpha, chloroplastic (503 aa).

170–177 is an ATP binding site; the sequence is GDRQTGKT.

This sequence belongs to the ATPase alpha/beta chains family. In terms of assembly, F-type ATPases have 2 components, CF(1) - the catalytic core - and CF(0) - the membrane proton channel. CF(1) has five subunits: alpha(3), beta(3), gamma(1), delta(1), epsilon(1). CF(0) has four main subunits: a, b, b' and c.

Its subcellular location is the plastid. It localises to the chloroplast thylakoid membrane. It catalyses the reaction ATP + H2O + 4 H(+)(in) = ADP + phosphate + 5 H(+)(out). Functionally, produces ATP from ADP in the presence of a proton gradient across the membrane. The alpha chain is a regulatory subunit. This is ATP synthase subunit alpha, chloroplastic from Gracilaria tenuistipitata var. liui (Red alga).